The sequence spans 187 residues: MRIRLATNNPYKLAEVSHILAPFCIEVERLDAEKVEIQHDDVVVIARKAAEFLCSRYGDFVVVDDTGLYIEALGGFPGPYAEYVYRTIGLKGVLKLLEGAADRRATFKCAAAICIGGRVEVFVGEVRGYIAHEPRGRGGFGYDPIFIPEGMTATYAELGEEVKNKISHRAKAFSQLGAWLTNRNLFK.

Substrate is bound at residue 7–12; that stretch reads TNNPYK. Mg(2+)-binding residues include Glu36 and Asp65. Asp65 acts as the Proton acceptor in catalysis. Substrate-binding positions include Thr66, 140-143, Lys163, and 168-169; these read FGYD and HR.

It belongs to the HAM1 NTPase family. As to quaternary structure, homodimer. Mg(2+) serves as cofactor.

The catalysed reaction is XTP + H2O = XMP + diphosphate + H(+). It carries out the reaction dITP + H2O = dIMP + diphosphate + H(+). It catalyses the reaction ITP + H2O = IMP + diphosphate + H(+). In terms of biological role, pyrophosphatase that catalyzes the hydrolysis of nucleoside triphosphates to their monophosphate derivatives, with a high preference for the non-canonical purine nucleotides XTP (xanthosine triphosphate), dITP (deoxyinosine triphosphate) and ITP. Seems to function as a house-cleaning enzyme that removes non-canonical purine nucleotides from the nucleotide pool, thus preventing their incorporation into DNA/RNA and avoiding chromosomal lesions. The protein is dITP/XTP pyrophosphatase of Pyrobaculum aerophilum (strain ATCC 51768 / DSM 7523 / JCM 9630 / CIP 104966 / NBRC 100827 / IM2).